A 209-amino-acid polypeptide reads, in one-letter code: MWKWILTHCASAFPHLPGCCCCFLLLFLVSSFPVTCQALGQDMVSQEATNCSSSSSSFSSPSSAGRHVRSYNHLQGDVRWRRLFSFTKYFLTIEKNGKVSGTKNEDCPYSVLEITSVEIGVVAVKAINSNYYLAMNKKGKLYGSKEFNNDCKLKERIEENGYNTYASFNWQHNGRQMYVALNGKGAPRRGQKTRRKNTSAHFLPMTIQT.

A signal peptide spans 1–36; that stretch reads MWKWILTHCASAFPHLPGCCCCFLLLFLVSSFPVTC. N-linked (GlcNAc...) asparagine glycosylation is found at Asn50 and Asn197.

It belongs to the heparin-binding growth factors family. As to quaternary structure, interacts with FGFR1 and FGFR2. Interacts with FGFBP1. As to expression, expressed abundantly in embryos and the lung, and at much lower levels in brain and heart.

Its subcellular location is the secreted. Its function is as follows. Plays an important role in the regulation of embryonic development, cell proliferation and cell differentiation. Required for normal branching morphogenesis. May play a role in wound healing. The chain is Fibroblast growth factor 10 (Fgf10) from Mus musculus (Mouse).